The sequence spans 441 residues: Protein disulfide isomerase-like 2-3 (441 aa).

Residues 1–18 (MRPAVAAALLLVAAAVAA) form the signal peptide. Thioredoxin domains lie at 19–139 (SPVS…ALLR) and 159–276 (SEKT…ANAA). Catalysis depends on nucleophile residues cysteine 59 and cysteine 62. An intrachain disulfide couples cysteine 59 to cysteine 62. Positions 143–166 (NGKTSAGSGGKKSGGSSEKTEPSA) are disordered. Residues cysteine 195 and cysteine 198 each act as nucleophile in the active site. Cysteine 195 and cysteine 198 form a disulfide bridge.

Belongs to the protein disulfide isomerase family.

It is found in the endoplasmic reticulum lumen. The catalysed reaction is Catalyzes the rearrangement of -S-S- bonds in proteins.. Acts as a protein-folding catalyst that interacts with nascent polypeptides to catalyze the formation, isomerization, and reduction or oxidation of disulfide bonds. May play a role in storage protein biogenesis. In Oryza sativa subsp. japonica (Rice), this protein is Protein disulfide isomerase-like 2-3 (PDIL2-3).